The chain runs to 349 residues: D-arabinose 1-dehydrogenase (NADP(+)) (349 aa).

Zn(2+) contacts are provided by C46, H70, D99, C102, C105, C113, and D155.

Belongs to the zinc-containing alcohol dehydrogenase family. As to quaternary structure, homotetramer. Dimer of dimers. Requires Zn(2+) as cofactor.

The catalysed reaction is D-arabinose + NADP(+) = D-arabinono-1,4-lactone + NADPH + H(+). Participates in a pentose oxidation pathway that converts D-arabinose to 2-oxoglutarate. Catalyzes the NADP-dependent conversion of D-arabinose to D-arabinono-1,4-lactone. In vitro, can also use L-fucose, L-galactose and D-ribose. Shows highest activity with L-fucose, in combinaison with NAD, and lower activity toward L-galactose and D-ribose. When acting on its physiological substrate, D-arabinose, shows a clear preference for NADP over NAD. This Saccharolobus solfataricus (strain ATCC 35092 / DSM 1617 / JCM 11322 / P2) (Sulfolobus solfataricus) protein is D-arabinose 1-dehydrogenase (NADP(+)).